The primary structure comprises 226 residues: RNA pyrophosphohydrolase (226 aa).

One can recognise a Nudix hydrolase domain in the interval 6 to 149; it reads GFRPNVGIIL…KRGVYEMALT (144 aa). A Nudix box motif is present at residues 38–59; that stretch reads GGIDRGETPEQAMFRELHEEVG. The disordered stretch occupies residues 197 to 226; it reads MELPPGASFDPDPRTGDGDPGMPGIHKPAG.

This sequence belongs to the Nudix hydrolase family. RppH subfamily. It depends on a divalent metal cation as a cofactor.

Accelerates the degradation of transcripts by removing pyrophosphate from the 5'-end of triphosphorylated RNA, leading to a more labile monophosphorylated state that can stimulate subsequent ribonuclease cleavage. In Paracidovorax citrulli (strain AAC00-1) (Acidovorax citrulli), this protein is RNA pyrophosphohydrolase.